We begin with the raw amino-acid sequence, 858 residues long: Heat shock protein 105 kDa (858 aa).

Serine 2 is subject to N-acetylserine. Lysine 471 is subject to N6-acetyllysine. Disordered stretches follow at residues 500–585 and 801–858; these read KVPT…PPEA and VTQP…MDLD. A compositionally biased stretch (acidic residues) spans 504–515; sequence EEEDGSSVEADM. Phosphoserine occurs at positions 509 and 510. Polar residues predominate over residues 533 to 555; the sequence is QQDNSEAGTQPQVQTDGQQTSQS. Serine 558 is modified (phosphoserine). Threonine 562 carries the phosphothreonine modification. Basic and acidic residues-rich tracts occupy residues 564–585 and 806–815; these read EENK…PPEA and PKIESPKLER. Residue serine 810 is modified to Phosphoserine. The residue at position 816 (threonine 816) is a Phosphothreonine.

The protein belongs to the heat shock protein 70 family. Interacts with HSPA8/HSC70. Interacts with HSPA1A (via NBD) and HSPA1B (via NBD). In terms of processing, phosphorylation on Ser-509 may be important for regulation of the HSPA8/HSC70 chaperone activity.

Its subcellular location is the cytoplasm. Acts as a nucleotide-exchange factor (NEF) for chaperone proteins HSPA1A and HSPA1B, promoting the release of ADP from HSPA1A/B thereby triggering substrate release. Prevents the aggregation of denatured proteins in cells under severe stress, on which the ATP levels decrease markedly. Inhibits HSPA8/HSC70 ATPase and chaperone activities. The protein is Heat shock protein 105 kDa (Hsph1) of Rattus norvegicus (Rat).